The primary structure comprises 250 residues: Ubiquinone/menaquinone biosynthesis C-methyltransferase UbiE (250 aa).

S-adenosyl-L-methionine-binding positions include T73, D94, 122–123, and S139; that span reads NA.

The protein belongs to the class I-like SAM-binding methyltransferase superfamily. MenG/UbiE family.

The catalysed reaction is a 2-demethylmenaquinol + S-adenosyl-L-methionine = a menaquinol + S-adenosyl-L-homocysteine + H(+). It catalyses the reaction a 2-methoxy-6-(all-trans-polyprenyl)benzene-1,4-diol + S-adenosyl-L-methionine = a 5-methoxy-2-methyl-3-(all-trans-polyprenyl)benzene-1,4-diol + S-adenosyl-L-homocysteine + H(+). Its pathway is quinol/quinone metabolism; menaquinone biosynthesis; menaquinol from 1,4-dihydroxy-2-naphthoate: step 2/2. It functions in the pathway cofactor biosynthesis; ubiquinone biosynthesis. Its function is as follows. Methyltransferase required for the conversion of demethylmenaquinol (DMKH2) to menaquinol (MKH2) and the conversion of 2-polyprenyl-6-methoxy-1,4-benzoquinol (DDMQH2) to 2-polyprenyl-3-methyl-6-methoxy-1,4-benzoquinol (DMQH2). The chain is Ubiquinone/menaquinone biosynthesis C-methyltransferase UbiE from Francisella tularensis subsp. tularensis (strain WY96-3418).